We begin with the raw amino-acid sequence, 69 residues long: Cold shock-like protein CspE (69 aa).

Residues 6-66 (GNVKWFNESK…GAKGPSAANV (61 aa)) enclose the CSD domain.

The protein localises to the cytoplasm. The chain is Cold shock-like protein CspE (cspE) from Buchnera aphidicola subsp. Acyrthosiphon pisum (strain APS) (Acyrthosiphon pisum symbiotic bacterium).